Consider the following 376-residue polypeptide: Lysocardiolipin acyltransferase 1 (376 aa).

The helical transmembrane segment at 9 to 29 (FILFLFAGSFFGSIFMLGPIL) threads the bilayer. N-linked (GlcNAc...) asparagine glycosylation occurs at Asn35. Residues 48–68 (ATWLTLPVALLETMFGVRVVI) traverse the membrane as a helical segment. Residues 85–90 (HRTRVD) carry the HXXXXD motif motif. The residue at position 183 (Lys183) is an N6-acetyllysine. 2 consecutive transmembrane segments (helical) span residues 309–329 (LLSI…IYLY) and 336–356 (FIIS…LEII).

It belongs to the 1-acyl-sn-glycerol-3-phosphate acyltransferase family. Widely expressed with highest expression in heart, liver and 12.5 dpc aorta-gonad-mesonephros and lower levels in the 16 dpc fetal liver and adult bone marrow. In bone marrow, highest levels are found in B-cells compared with whole bone marrow, T-cells, erythrocytes, and granulocytes.

It localises to the endoplasmic reticulum membrane. It catalyses the reaction a 1-acyl-sn-glycero-3-phosphate + an acyl-CoA = a 1,2-diacyl-sn-glycero-3-phosphate + CoA. It carries out the reaction a 1-acyl-sn-glycero-3-phospho-(1D-myo-inositol) + an acyl-CoA = a 1,2-diacyl-sn-glycero-3-phospho-(1D-myo-inositol) + CoA. The catalysed reaction is 1-acyl-sn-glycero-3-phospho-(1'-sn-glycerol) + an acyl-CoA = a 1,2-diacyl-sn-glycero-3-phospho-(1'-sn-glycerol) + CoA. The enzyme catalyses 1-hexadecanoyl-sn-glycero-3-phosphate + (9Z)-octadecenoyl-CoA = 1-hexadecanoyl-2-(9Z-octadecenoyl)-sn-glycero-3-phosphate + CoA. It catalyses the reaction 1-(9Z-octadecenoyl)-sn-glycero-3-phosphate + (9Z)-octadecenoyl-CoA = 1,2-di-(9Z-octadecenoyl)-sn-glycero-3-phosphate + CoA. It carries out the reaction 1-(9Z,12Z)-octadecadienoyl-sn-glycero-3-phosphate + (9Z)-octadecenoyl-CoA = 1-(9Z,12Z)-octadecadienoyl-2-(9Z)-octadecenoyl-sn-glycero-3-phosphate + CoA. The catalysed reaction is 1-(9Z,12Z,15Z)-octadecatrienoyl-sn-glycero-3-phosphate + (9Z)-octadecenoyl-CoA = 1-(9Z,12Z,15Z)-octadecatrienoyl-2-(9Z)-octadecenoyl-sn-glycero-3-phosphate + CoA. The enzyme catalyses 1-(9Z-octadecenoyl)-sn-glycero-3-phosphate + hexadecanoyl-CoA = 1-(9Z)-octadecenoyl-2-hexadecanoyl-sn-glycero-3-phosphate + CoA. It catalyses the reaction 1-(9Z-octadecenoyl)-sn-glycero-3-phosphate + octadecanoyl-CoA = 1-(9Z-octadecenoyl)-2-octadecanoyl-sn-glycero-3-phosphate + CoA. It carries out the reaction 1-acyl-sn-glycero-3-phospho-(1'-sn-glycerol) + (9Z)-octadecenoyl-CoA = 1-acyl-2-(9Z-octadecenoyl)-sn-glycero-3-phospho-(1'-sn-glycerol) + CoA. The catalysed reaction is a 1-acyl-sn-glycero-3-phospho-(1D-myo-inositol) + (9Z)-octadecenoyl-CoA = a 1-acyl-2-(9Z-octadecenoyl)-sn-glycero-3-phospho-(1D-myo-inositol) + CoA. The enzyme catalyses 1-hexadecanoyl-sn-glycero-3-phospho-(1D-myo-inositol) + hexadecanoyl-CoA = 1,2-dihexadecanoyl-sn-glycero-3-phospho-(1D-myo-inositol) + CoA. It catalyses the reaction 1-hexadecanoyl-sn-glycero-3-phospho-(1D-myo-inositol) + octadecanoyl-CoA = 1-hexadecanoyl-2-octadecanoyl-sn-glycero-3-phospho-(1D-myo-inositol) + CoA. It carries out the reaction 1-hexadecanoyl-sn-glycero-3-phospho-(1D-myo-inositol) + (9Z)-octadecenoyl-CoA = 1-hexadecanoyl-2-(9Z-octadecenoyl)-sn-glycero-3-phospho-(1D-myo-inositol) + CoA. The catalysed reaction is 1-hexadecanoyl-sn-glycero-3-phospho-(1D-myo-inositol) + (9Z,12Z)-octadecadienoyl-CoA = 1-hexadecanoyl-2-(9Z,12Z-octadecadienoyl)-sn-glycero-3-phospho-(1D-myo-inositol) + CoA. The enzyme catalyses 1-hexadecanoyl-sn-glycero-3-phospho-(1D-myo-inositol) + (5Z,8Z,11Z,14Z)-eicosatetraenoyl-CoA = 1-hexadecanoyl-2-(5Z,8Z,11Z,14Z-eicosatetraenoyl)-sn-glycero-3-phospho-D-myo-inositol + CoA. It catalyses the reaction 1-hexadecanoyl-sn-glycero-3-phospho-(1'-sn-glycerol) + hexadecanoyl-CoA = 1,2-dihexadecanoyl-sn-glycero-3-phospho-(1'-sn-glycerol) + CoA. It carries out the reaction 1-hexadecanoyl-sn-glycero-3-phospho-(1'-sn-glycerol) + octadecanoyl-CoA = 1-hexadecanoyl-2-octadecanoyl-sn-glycero-3-phospho-(1'-sn-glycerol) + CoA. The catalysed reaction is 1-hexadecanoyl-sn-glycero-3-phospho-(1'-sn-glycerol) + (9Z)-octadecenoyl-CoA = 1-hexadecanoyl-2-(9Z-octadecenoyl)-sn-glycero-3-phospho-(1'-sn-glycerol) + CoA. The enzyme catalyses 1-hexadecanoyl-sn-glycero-3-phospho-(1'-sn-glycerol) + (9Z,12Z)-octadecadienoyl-CoA = 1-hexadecanoyl-2-(9Z,12Z-octadecadienoyl)-sn-glycero-3-phospho-(1'-sn-glycerol) + CoA. It catalyses the reaction 1-tetradecanoyl-sn-glycero-3-phospho-(1'-sn-glycerol) + (9Z)-octadecenoyl-CoA = 1-tetradecanoyl-2-(9Z-octadecenoyl)-sn-glycero-3-phospho-(1'-sn-glycerol) + CoA. It carries out the reaction 1-octadecanoyl-sn-glycero-3-phospho-(1'-sn-glycerol) + (9Z)-octadecenoyl-CoA = 1-octadecanoyl-2-(9Z-octadecenoyl)-sn-glycero-3-phospho-(1'-sn-glycerol) + CoA. The catalysed reaction is 1-(9Z-octadecenoyl)-sn-glycero-3-phospho-(1'-sn-glycerol) + (9Z)-octadecenoyl-CoA = 1,2-di-(9Z-octadecenoyl)-sn-glycero-3-phospho-(1'-sn-glycerol) + CoA. The enzyme catalyses 1-hexadecanoyl-sn-glycero-3-phospho-(1D-myo-inositol) + dodecanoyl-CoA = 1-hexadecanoyl-2-dodecanoyl-sn-glycero-3-phospho-(1D-myo-inositol) + CoA. It catalyses the reaction 1',3'-bis-[1-acyl-sn-glycero-3-phospho]-glycerol + (9Z)-octadecenoyl-CoA = 1'-[1-acyl-2-(9Z)-octadecenoyl-sn-glycero-3-phospho],3'-[1-acyl,2-hydroxy-sn-glycero-3-phospho]-glycerol + CoA. It carries out the reaction 1'-[1,2-diacyl-sn-glycero-3-phospho],3'-[1-acyl-sn-glycero-3-phospho]-glycerol + (9Z)-octadecenoyl-CoA = 1'-[1,2-diacyl-sn-glycero-3-phospho],3'-[1-acyl,2-(9Z)-octadecenoyl-sn-glycero-3-phospho]-glycerol + CoA. The catalysed reaction is 1'-[1,2-diacyl-sn-glycero-3-phospho],3'-[1-acyl-sn-glycero-3-phospho]-glycerol + (9Z,12Z)-octadecadienoyl-CoA = 1'-[1,2-diacyl-sn-glycero-3-phospho],3'-[1-acyl,2-(9Z,12Z)-octadecadienoyl-sn-glycero-3-phospho]-glycerol + CoA. The enzyme catalyses 1'-[1,2-diacyl-sn-glycero-3-phospho],3'-[1-acyl-sn-glycero-3-phospho]-glycerol + dodecanoyl-CoA = 1'-[1,2-diacyl-sn-glycero-3-phospho],3'-[1-acyl,2-dodecanoyl-sn-glycero-3-phospho]-glycerol + CoA. It catalyses the reaction 1',3'-bis-[1-acyl-sn-glycero-3-phospho]-glycerol + dodecanoyl-CoA = 1'-[1-acyl-2-dodecanoyl-sn-glycero-3-phospho],3'-[1-acyl,2-hydroxy-sn-glycero-3-phospho]-glycerol + CoA. It carries out the reaction a 1-acyl-sn-glycero-3-phosphate + (9Z)-octadecenoyl-CoA = a 1-acyl-2-(9Z-octadecenoyl)-sn-glycero-3-phosphate + CoA. The catalysed reaction is 1',3'-bis-[1-acyl-sn-glycero-3-phospho]-glycerol + (9Z,12Z)-octadecadienoyl-CoA = 1'-[1-acyl-2-(9Z,12Z)-octadecadienoyl-sn-glycero-3-phospho],3'-[1-acyl,2-hydroxy-sn-glycero-3-phospho]-glycerol + CoA. The enzyme catalyses 1',3'-bis-[1-acyl-sn-glycero-3-phospho]-glycerol + hexadecanoyl-CoA = 1'-[1-acyl-2-hexadecanoyl-sn-glycero-3-phospho],3'-[1-acyl,2-hydroxy-sn-glycero-3-phospho]-glycerol + CoA. It catalyses the reaction 1',3'-bis-[1-acyl-sn-glycero-3-phospho]-glycerol + octadecanoyl-CoA = 1'-[1-acyl-2-octadecanoyl-sn-glycero-3-phospho],3'-[1-acyl,2-hydroxy-sn-glycero-3-phospho]-glycerol + CoA. It carries out the reaction 1'-[1,2-diacyl-sn-glycero-3-phospho],3'-[1-acyl-sn-glycero-3-phospho]-glycerol + octanoyl-CoA = 1'-[1,2-diacyl-sn-glycero-3-phospho],3'-[1-acyl,2-octanoyl-sn-glycero-3-phospho]-glycerol + CoA. The catalysed reaction is 1',3'-bis-[1-acyl-sn-glycero-3-phospho]-glycerol + octanoyl-CoA = 1'-[1-acyl-2-octanoyl-sn-glycero-3-phospho],3'-[1-acyl,2-hydroxy-sn-glycero-3-phospho]-glycerol + CoA. The enzyme catalyses 1'-[1,2-diacyl-sn-glycero-3-phospho],3'-[1-acyl-sn-glycero-3-phospho]-glycerol + hexadecanoyl-CoA = 1'-[1,2-diacyl-sn-glycero-3-phospho],3'-[1-acyl,2-hexadecanoyl-sn-glycero-3-phospho]-glycerol + CoA. It catalyses the reaction 1'-[1,2-diacyl-sn-glycero-3-phospho],3'-[1-acyl-sn-glycero-3-phospho]-glycerol + (5Z,8Z,11Z,14Z)-eicosatetraenoyl-CoA = 1'-[1,2-diacyl-sn-glycero-3-phospho],3'-[1-acyl,2-(5Z,8Z,11Z,14Z)-eicosatetraenoyl-sn-glycero-3-phospho]-glycerol + CoA. It carries out the reaction 1',3'-bis-[1-acyl-sn-glycero-3-phospho]-glycerol + (5Z,8Z,11Z,14Z)-eicosatetraenoyl-CoA = 1'-[1-acyl-2-(5Z,8Z,11Z,14Z)-eicosatetraenoyl-sn-glycero-3-phospho],3'-[1-acyl,2-hydroxy-sn-glycero-3-phospho]-glycerol + CoA. The catalysed reaction is a 1-acyl-sn-glycero-3-phospho-(1D-myo-inositol) + octadecanoyl-CoA = a 1-acyl-2-octadecanoyl-sn-glycero-3-phospho-(1D-myo-inositol) + CoA. The enzyme catalyses a 2-acyl-sn-glycero-3-phospho-D-myo-inositol + octadecanoyl-CoA = 1-octadecanoyl-2-acyl-sn-glycero-3-phospho-1D-myo-inositol + CoA. Its pathway is phospholipid metabolism; CDP-diacylglycerol biosynthesis; CDP-diacylglycerol from sn-glycerol 3-phosphate: step 2/3. Its function is as follows. Exhibits acyl-CoA:lysocardiolipin acyltransferase (ALCAT) activity; catalyzes the reacylation of lyso-cardiolipin to cardiolipin (CL), a key step in CL remodeling. Recognizes both monolysocardiolipin and dilysocardiolipin as substrates with a preference for linoleoyl-CoA and oleoyl-CoA as acyl donors. Also exhibits 1-acyl-sn-glycerol-3-phosphate acyltransferase activity (AGPAT) activity; converts 1-acyl-sn-glycerol-3- phosphate (lysophosphatidic acid or LPA) into 1,2-diacyl-sn-glycerol-3- phosphate (phosphatidic acid or PA) by incorporating an acyl moiety at the sn-2 position of the glycerol backbone. Possesses lysophosphatidylinositol acyltransferase (LPIAT) activity. Possesses lysophosphatidylglycerol acyltransferase (LPGAT) activity. Required for establishment of the hematopoietic and endothelial lineages. In Mus musculus (Mouse), this protein is Lysocardiolipin acyltransferase 1 (Lclat1).